The chain runs to 353 residues: Fe(3+) ions import ATP-binding protein FbpC (353 aa).

The ABC transporter domain maps to 9–239 (VTFENVTKKF…PASAFIADFM (231 aa)). 41–48 (GLSGCGKT) serves as a coordination point for ATP.

It belongs to the ABC transporter superfamily. Fe(3+) ion importer (TC 3.A.1.10) family. The complex is composed of two ATP-binding proteins (FbpC), two transmembrane proteins (FbpB) and a solute-binding protein (FbpA).

It localises to the cell inner membrane. It carries out the reaction Fe(3+)(out) + ATP + H2O = Fe(3+)(in) + ADP + phosphate + H(+). Part of the ABC transporter complex FbpABC involved in Fe(3+) ions import. Responsible for energy coupling to the transport system. The protein is Fe(3+) ions import ATP-binding protein FbpC of Brucella melitensis biotype 1 (strain ATCC 23456 / CCUG 17765 / NCTC 10094 / 16M).